Here is a 200-residue protein sequence, read N- to C-terminus: Small ribosomal subunit protein uS4 (200 aa).

The 60-residue stretch at 91–150 (TRLDNVVYRLGITPTRRSARQLVSHKHITVNGKIVNIPSYALKVGDIIGLTEKTKSSNAI) folds into the S4 RNA-binding domain.

The protein belongs to the universal ribosomal protein uS4 family. In terms of assembly, part of the 30S ribosomal subunit. Contacts protein S5. The interaction surface between S4 and S5 is involved in control of translational fidelity.

One of the primary rRNA binding proteins, it binds directly to 16S rRNA where it nucleates assembly of the body of the 30S subunit. Its function is as follows. With S5 and S12 plays an important role in translational accuracy. In Amoebophilus asiaticus (strain 5a2), this protein is Small ribosomal subunit protein uS4.